The chain runs to 360 residues: Acetylxylan esterase / glucomannan deacetylase (360 aa).

Residues 1 to 21 form the signal peptide; sequence MKPHALIGLLAGMLLSSSLYA. The Nucleophile role is filled by Ser-151.

The protein belongs to the carbohydrate esterase 2 (CE2) family.

The protein resides in the secreted. The enzyme catalyses Deacetylation of xylans and xylo-oligosaccharides.. It functions in the pathway glycan degradation; xylan degradation. Involved in the degradation of plant cell wall polysaccharides. Catalyzes the deacetylation of acetylated birchwood xylan and glucomannan, with a large preference for the latter, and of the synthetic substrate 4-nitrophenyl acetate (4-NPAc). The polypeptide is Acetylxylan esterase / glucomannan deacetylase (Cellvibrio japonicus (strain Ueda107) (Pseudomonas fluorescens subsp. cellulosa)).